We begin with the raw amino-acid sequence, 352 residues long: B1 bradykinin receptor (352 aa).

Residues 1–41 are Extracellular-facing; that stretch reads MASWPPLELQSSNQSQLFPQNATACDNAPEAWDLLHRVLPT. 2 N-linked (GlcNAc...) asparagine glycosylation sites follow: Asn-13 and Asn-21. A helical transmembrane segment spans residues 42–62; sequence FIISICSFGLLGNLFVLLVFL. Topologically, residues 63–72 are cytoplasmic; that stretch reads LPRRRLNVAE. A helical transmembrane segment spans residues 73–93; the sequence is IYLANLAASDLVFVLGLPFWA. Residues 94–110 lie on the Extracellular side of the membrane; sequence ENIWNQFNWPFGALLCR. A disulfide bridge links Cys-109 with Cys-188. A helical transmembrane segment spans residues 111–131; that stretch reads GINGVIKANLFISIFLVVAIS. Residues 132-153 are Cytoplasmic-facing; it reads QDRYCLLVHPMASRRRQRRRQA. The chain crosses the membrane as a helical span at residues 154–174; it reads RVTCVLIWVVGGLLSIPTFLL. At 175–206 the chain is on the extracellular side; that stretch reads RSIQAVPDLNITACILLLPHEAWHFARIVELN. Asn-184 carries N-linked (GlcNAc...) asparagine glycosylation. Residues 207–227 traverse the membrane as a helical segment; it reads ILAFLLPLAAIVFFNYHILAS. The Cytoplasmic portion of the chain corresponds to 228-250; that stretch reads LRGREEVSRTRCGGRKDSKTTAL. Residues 251–271 form a helical membrane-spanning segment; sequence ILTLVVAFLVCWAPYHFFAFL. The Extracellular segment spans residues 272–294; the sequence is EFLFQVQAIRGCFWEDFIDLGLQ. The helical transmembrane segment at 295–315 threads the bilayer; the sequence is LANFLAFTNSSLNPVIYVFVG. The Cytoplasmic segment spans residues 316-352; that stretch reads RLFRTKVWELYKQCTPKSLAPISSSHRKEIFQLFWRN. A lipid anchor (S-palmitoyl cysteine) is attached at Cys-329.

It belongs to the G-protein coupled receptor 1 family. Bradykinin receptor subfamily. BDKRB1 sub-subfamily.

The protein resides in the cell membrane. Functionally, this is a receptor for bradykinin. Could be a factor in chronic pain and inflammation. This is B1 bradykinin receptor (BDKRB1) from Chlorocebus aethiops (Green monkey).